Reading from the N-terminus, the 365-residue chain is Spermidine/putrescine import ATP-binding protein PotA (365 aa).

The ABC transporter domain occupies 9-239; sequence IRLTNVTKSY…PINHFVANFI (231 aa). 41-48 provides a ligand contact to ATP; the sequence is GPSGCGKT.

The protein belongs to the ABC transporter superfamily. Spermidine/putrescine importer (TC 3.A.1.11.1) family. As to quaternary structure, the complex is composed of two ATP-binding proteins (PotA), two transmembrane proteins (PotB and PotC) and a solute-binding protein (PotD).

It is found in the cell membrane. It carries out the reaction ATP + H2O + polyamine-[polyamine-binding protein]Side 1 = ADP + phosphate + polyamineSide 2 + [polyamine-binding protein]Side 1.. Part of the ABC transporter complex PotABCD involved in spermidine/putrescine import. Responsible for energy coupling to the transport system. This is Spermidine/putrescine import ATP-binding protein PotA from Lactiplantibacillus plantarum (strain ATCC BAA-793 / NCIMB 8826 / WCFS1) (Lactobacillus plantarum).